An 872-amino-acid polypeptide reads, in one-letter code: HTH-type transcriptional regulator AlkS (872 aa).

The HTH luxR-type domain occupies 805 to 870 (LTNTQSTITI…RAVSEARLRG (66 aa)). Residues 829–848 (NKEIAERLLITEDTVKWHLK) constitute a DNA-binding region (H-T-H motif).

It functions in the pathway hydrocarbon metabolism; alkane degradation. This protein activates the expression of AlkB1 in the presence of alkanes. The polypeptide is HTH-type transcriptional regulator AlkS (alkS) (Alcanivorax borkumensis (strain ATCC 700651 / DSM 11573 / NCIMB 13689 / SK2)).